A 164-amino-acid chain; its full sequence is R-phycoerythrin alpha chain (164 aa).

(2R,3E)-phycoerythrobilin is bound by residues asparagine 47, lysine 81, cysteine 82, arginine 84, histidine 88, arginine 137, cysteine 139, and arginine 142.

It belongs to the phycobiliprotein family. Heterododecamer of 6 alpha and 6 beta chains. The basic functional unit of phycobiliproteins is a ring-shaped hexamer formed from two back-to-back trimers contacting via the alpha chain subunits. The trimers are composed of alpha/beta subunit heterodimers arranged around a three-fold axis of symmetry. The phycoerythrins also contain a gamma subunit which is located in the center of the hexamer. In terms of processing, contains two covalently linked phycoerythrobilin chromophores.

Its subcellular location is the plastid. The protein localises to the chloroplast thylakoid membrane. Its function is as follows. Light-harvesting photosynthetic tetrapyrrole chromophore-protein from the phycobiliprotein complex. The sequence is that of R-phycoerythrin alpha chain (rpeA) from Agarophyton chilense (Red seaweed).